A 447-amino-acid chain; its full sequence is Enolase (447 aa).

Position 168 (Q168) interacts with (2R)-2-phosphoglycerate. E210 acts as the Proton donor in catalysis. Residues D247, E292, and D319 each contribute to the Mg(2+) site. 4 residues coordinate (2R)-2-phosphoglycerate: K344, R373, S374, and K395. K344 (proton acceptor) is an active-site residue.

The protein belongs to the enolase family. As to quaternary structure, component of the RNA degradosome, a multiprotein complex involved in RNA processing and mRNA degradation. Mg(2+) serves as cofactor.

The protein localises to the cytoplasm. Its subcellular location is the secreted. It is found in the cell surface. It carries out the reaction (2R)-2-phosphoglycerate = phosphoenolpyruvate + H2O. It functions in the pathway carbohydrate degradation; glycolysis; pyruvate from D-glyceraldehyde 3-phosphate: step 4/5. Catalyzes the reversible conversion of 2-phosphoglycerate (2-PG) into phosphoenolpyruvate (PEP). It is essential for the degradation of carbohydrates via glycolysis. The sequence is that of Enolase from Blochmanniella floridana.